Consider the following 408-residue polypeptide: MHPRRPEGFDGLGYRGGGREEPCPGVRPFGGGAEMGHWVTTPPDIPGSRNLHWGEKTPPYGAGTPLGAAGLNEEPGLGAGGPGAEQLNRFAGFGIGLASLFTENVLAHPCIVLRRQCQVNYHARNYHLTPFTIVNIMYSINKTQGPRALWKGMGSTFIVQGITLGTEGIISEFTPLPRELSHKWNLKQIGGHLLLKGLTHVIAMPFYSASLIETVQSEIIRDNPGILDCVKEGIGRVVGMGVPHSKRLLPLMVLIFPTALHGVLHYVISSIVQKLVLLFLKRENSHSLPTESSTSVQSMLDAYFPELIASFAASLCADVMLYPLETVLHRLHIQGTRTIIDNTDLGYEVLPINTQYEGMRDCINTIKREEGMLGFYKGFGAVVVQYTLHVAVLQLTKIIYSTLLQNVS.

2 disordered regions span residues 1–23 (MHPRRPEGFDGLGYRGGGREEPC) and 52–80 (HWGEKTPPYGAGTPLGAAGLNEEPGLGAG). A compositionally biased stretch (low complexity) spans 66 to 76 (LGAAGLNEEPG). Residues 86–177 (QLNRFAGFGI…GIISEFTPLP (92 aa)) form a Solcar 1 repeat. 6 helical membrane passes run 93–113 (FGIGLASLFTENVLAHPCIVL), 157–177 (FIVQGITLGTEGIISEFTPLP), 189–209 (IGGHLLLKGLTHVIAMPFYSA), 248–268 (LLPLMVLIFPTALHGVLHYVI), 304–324 (FPELIASFAASLCADVMLYPL), and 373–393 (LGFYKGFGAVVVQYTLHVAVL). The stretch at 301–403 (DAYFPELIAS…QLTKIIYSTL (103 aa)) is one Solcar 2 repeat.

Belongs to the mitochondrial carrier (TC 2.A.29) family.

Its subcellular location is the mitochondrion outer membrane. Its function is as follows. Transmembrane protein of the mitochondrial outer membrane that controls mitochondrial organization. May regulate the assembly of the MICOS (mitochondrial contact site and cristae organizing system) complex which is essential to the biogenesis and dynamics of mitochondrial cristae, the inwards folds of the inner mitochondrial membrane. Through its interaction with the EMC (endoplasmic reticulum membrane protein complex), could regulate mitochondrial lipid homeostasis and thereby mitochondrial fission. This chain is Mitochondrial outer membrane protein SLC25A46, found in Gallus gallus (Chicken).